The sequence spans 229 residues: Sperm-associated microtubule inner protein 5 (229 aa).

Positions 181-201 (PEFSGPGQTPPSEDPQAPRPC) are disordered.

As to quaternary structure, microtubule inner protein component of sperm flagellar doublet microtubules. In terms of tissue distribution, expressed in testis (at protein level).

It is found in the cytoplasm. The protein localises to the cytoskeleton. The protein resides in the flagellum axoneme. Its subcellular location is the nucleus. Its function is as follows. Microtubule inner protein (MIP) part of the dynein-decorated doublet microtubules (DMTs) in flagellum axoneme. May serve to reinforce and thus stabilize the microtubule structure in the sperm flagella. In Mus musculus (Mouse), this protein is Sperm-associated microtubule inner protein 5 (Spmip5).